We begin with the raw amino-acid sequence, 276 residues long: 4-chlorobenzoyl coenzyme A dehalogenase-1 (276 aa).

Position 66-71 (66-71 (AGFDLE)) interacts with substrate. His93 serves as the catalytic Proton acceptor. Position 117 (Gly117) interacts with substrate. The active-site Nucleophile is the Asp148. Arg261 provides a ligand contact to substrate.

The protein belongs to the enoyl-CoA hydratase/isomerase family. As to quaternary structure, homotetramer.

It carries out the reaction 4-chlorobenzoyl-CoA + H2O = 4-hydroxybenzoyl-CoA + chloride + H(+). It functions in the pathway xenobiotic degradation; 4-chlorobenzoate degradation; 4-hydroxybenzoate from 4-chlorobenzoate: step 2/3. In terms of biological role, dehalogenates 4-chlorobenzoyl-CoA, 4-iodobenzoyl-CoA, 4-bromobenzoyl-CoA and, at a slower rate, 4-fluorobenzoyl-CoA. Does not dehalogenate 2-chlorobenzoyl-CoA or 3-chlorobenzoyl-CoA. In Arthrobacter sp, this protein is 4-chlorobenzoyl coenzyme A dehalogenase-1.